A 167-amino-acid chain; its full sequence is Osteocalcin 2a (167 aa).

The signal sequence occupies residues 1-18; that stretch reads MKSLTLLTICAVLSVSLS. A propeptide spanning residues 19-118 is cleaved from the precursor; it reads MNDLALDVVL…LASVLLRRKR (100 aa). The disordered stretch occupies residues 28–99; the sequence is LDPAPDPATE…TTEDPAAATE (72 aa). Low complexity predominate over residues 38–87; it reads PAPAADSSASSSASSSSSSASDSSASASDSSDSDSSSASSSSSSSESASA. The 33-residue stretch at 131–163 folds into the Gla domain; it reads QVESLSEVCELNLACEHMAETAGIVAAYTAYYG. Ca(2+)-binding residues include Glu133, Glu137, and Glu140. Residues Glu133, Glu137, and Glu140 each carry the 4-carboxyglutamate modification. Residues Cys139 and Cys145 are joined by a disulfide bond.

It belongs to the osteocalcin/matrix Gla protein family. Gamma-carboxyglutamate residues are formed by vitamin K dependent carboxylation. These residues are essential for the binding of calcium.

The protein resides in the secreted. Functionally, binds strongly to apatite and calcium. The sequence is that of Osteocalcin 2a from Oncorhynchus mykiss (Rainbow trout).